A 391-amino-acid polypeptide reads, in one-letter code: Processive diacylglycerol beta-glucosyltransferase (391 aa).

The protein belongs to the glycosyltransferase 28 family. UgtP subfamily.

The protein localises to the cell membrane. The catalysed reaction is a 1,2-diacyl-3-O-(beta-D-glucopyranosyl)-sn-glycerol + UDP-alpha-D-glucose = a 1,2-diacyl-3-O-(beta-D-Glc-(1-&gt;6)-beta-D-Glc)-sn-glycerol + UDP + H(+). The enzyme catalyses a 1,2-diacyl-sn-glycerol + UDP-alpha-D-glucose = a 1,2-diacyl-3-O-(beta-D-glucopyranosyl)-sn-glycerol + UDP + H(+). The protein operates within glycolipid metabolism; diglucosyl-diacylglycerol biosynthesis. Its function is as follows. Processive glucosyltransferase involved in the biosynthesis of both the bilayer- and non-bilayer-forming membrane glucolipids. Is able to successively transfer two glucosyl residues to diacylglycerol (DAG), thereby catalyzing the formation of beta-monoglucosyl-DAG (3-O-(beta-D-glucopyranosyl)-1,2-diacyl-sn-glycerol) and beta-diglucosyl-DAG (3-O-(beta-D-glucopyranosyl-beta-(1-&gt;6)-D-glucopyranosyl)-1,2-diacyl-sn-glycerol). Beta-diglucosyl-DAG is the predominant glycolipid found in Bacillales and is also used as a membrane anchor for lipoteichoic acid (LTA). This chain is Processive diacylglycerol beta-glucosyltransferase, found in Staphylococcus saprophyticus subsp. saprophyticus (strain ATCC 15305 / DSM 20229 / NCIMB 8711 / NCTC 7292 / S-41).